Consider the following 240-residue polypeptide: Guanylate kinase (240 aa).

The Guanylate kinase-like domain maps to 56–236 (GRIFVITGPS…TLNELKSILL (181 aa)). Residue 63–70 (GPSGVGKS) participates in ATP binding.

This sequence belongs to the guanylate kinase family.

It localises to the cytoplasm. It carries out the reaction GMP + ATP = GDP + ADP. In terms of biological role, essential for recycling GMP and indirectly, cGMP. This is Guanylate kinase (gmk) from Mycoplasma genitalium (strain ATCC 33530 / DSM 19775 / NCTC 10195 / G37) (Mycoplasmoides genitalium).